A 665-amino-acid chain; its full sequence is Zinc finger CCCH domain-containing protein 45 (665 aa).

A disordered region spans residues 1–55; it reads MDDGDLSFDFEGGLDQPPAGGGGGPAPHSSDPGGVGGGGGGGGPGDGGGHGRGRG. The segment covering 33 to 50 has biased composition (gly residues); it reads GGVGGGGGGGGPGDGGGH. 3 C3H1-type zinc fingers span residues 58–85, 86–113, and 114–139; these read SYRQ…HQFD, KARM…HSYD, and DVKE…HVKL. Residues 167 to 256 form a disordered region; that stretch reads HNNYNQQGER…QATRIATPLP (90 aa). Residues 169 to 200 are compositionally biased toward polar residues; it reads NYNQQGERPQHPQGSGLPNQNSIDNTTTTTAQ. Low complexity predominate over residues 205-238; it reads QQAQTTNQQPPQQQQQQQQQQQQQQKPNTNDQVQ. Over residues 239 to 250 the composition is skewed to polar residues; that stretch reads SVPNGSSNQATR. The 136-residue stretch at 260–395 folds into the YTH domain; it reads SRYFIVKSCN…FIGEQLASLL (136 aa). Positions 432–459 form a coiled coil; sequence DIVLFDDNEEEEEEESEEEEEGNGQESQ. The span at 439 to 454 shows a compositional bias: acidic residues; it reads NEEEEEEESEEEEEGN. 2 disordered regions span residues 439-469 and 561-665; these read NEEE…GMMW and GPLM…SRKR. Gly residues predominate over residues 561–573; that stretch reads GPLMGGLGMGGPG. Over residues 596–623 the composition is skewed to basic and acidic residues; it reads TKREQRRPGGERGDRYETTSDQGSRGHD.

The polypeptide is Zinc finger CCCH domain-containing protein 45 (Oryza sativa subsp. japonica (Rice)).